A 228-amino-acid chain; its full sequence is Protein 33K (228 aa).

A disordered region spans residues 1–156 (MAPKKKLQLP…GALRLAPNEP (156 aa)). The span at 15–53 (TDEEEYWDSQAEEVLDEEEEMMEDWDSLDEASEAEEVSD) shows a compositional bias: acidic residues. Low complexity-rich tracts occupy residues 54 to 63 (ETPSPSVAFP) and 104 to 119 (AAPT…ATAA). The tract at residues 171-198 (YAIFQQSRGQEQELKIKNRSLRSLTRSC) is necessary for nuclear subcellular location. An RS-repeat; required for splicing enhancer activity region spans residues 177–197 (SRGQEQELKIKNRSLRSLTRS).

It belongs to the adenoviridae splicing factor family. Homooligomer. Interacts with DBP; this interaction occurs at a unique vertex during genome packaging. Interacts with IVa2; this interaction occurs at a unique vertex during genome packaging and seems to potentiate IVa2 and 33K oligomerization. Post-translationally, phosphorylated in vitro by human PKA and PRKDC. PRKDC inhibits, whereas PKA activates the splicing factor.

The protein localises to the host nucleus. Promotes alternative splicing of late transcripts by promoting splicing at weak 3' splice sites. Required for the temporal activation of major late pre-mRNA splicing at late times of infection. Induces the splicing and expression of the late capsid vertex protein. Its function is as follows. Probably functions as the small terminase that is part of the molecular motor that translocates genomic DNA in empty capsid during DNA packaging. This motor is located at a unique vertex and comprises at least the IVa2 ATPase, the small terminase 33K and probably a portal. Forms a ring-like structure of about 17 nm in which genomic DNA is translocated into the capsid. Stimulates IVa2 ATPase activity in the presence of the viral genome. Once the DNA is packaged, the terminase detaches: the 33K protein is present in the empty particles, but not in the mature virions. Also involved in virion assembly. This chain is Protein 33K, found in Homo sapiens (Human).